The chain runs to 657 residues: Tyrosine-protein phosphatase vhp-1 (657 aa).

Residues 21-151 (APDTTLVVDC…FAQQYPQLCE (131 aa)) enclose the Rhodanese domain. The Tyrosine-protein phosphatase domain maps to 175–318 (GITLITPNIY…LLEYENVLIK (144 aa)). Cysteine 262 (phosphocysteine intermediate) is an active-site residue. Disordered regions lie at residues 353–426 (SNCV…MDLG), 539–563 (VPAGSSSISTPSGSQSTPASASSSA), and 581–657 (PAST…PCHQ). Residues 366–405 (SPSSPSVSEGSAASEPETSSSAASSSSTASAPPSMPSTSE) are compositionally biased toward low complexity. Over residues 406–419 (QGTSSGTVNVNGKR) the composition is skewed to polar residues. Composition is skewed to low complexity over residues 542-563 (GSSSISTPSGSQSTPASASSSA) and 581-597 (PASTSTPASSTPGTSRA).

This sequence belongs to the protein-tyrosine phosphatase family. Non-receptor class dual specificity subfamily. May interact with pmk-3. Expressed in the pharynx, intestine, neurons and vulval hypodermal cells.

The catalysed reaction is O-phospho-L-tyrosyl-[protein] + H2O = L-tyrosyl-[protein] + phosphate. Its function is as follows. Acts preferentially on the c-Jun N-terminal kinase (JNK) and p38 MAPKs. Plays an important role in the heavy metal stress response and in axon regeneration by negatively regulating the kgb-1 (JNK-like) and the pmk-1 (p38-type) MAPK signaling pathways. This is Tyrosine-protein phosphatase vhp-1 (vhp-1) from Caenorhabditis elegans.